The following is a 371-amino-acid chain: Cytochrome b (371 aa).

A run of 4 helical transmembrane segments spans residues 25–45 (FGSM…FLAV), 69–90 (WIMQ…YIHI), 105–125 (WLSG…GYVL), and 170–190 (FFAL…IHII). Residues His75 and His89 each coordinate heme b. His174 and His188 together coordinate heme b. His193 is an a ubiquinone binding site. The next 4 helical transmembrane spans lie at 218 to 238 (YKDM…LSFM), 280 to 300 (LGGT…PFTH), 312 to 332 (LTQA…WTAT), and 339 to 358 (FTLI…IINP).

This sequence belongs to the cytochrome b family. As to quaternary structure, the cytochrome bc1 complex contains 3 respiratory subunits (MT-CYB, CYC1 and UQCRFS1), 2 core proteins (UQCRC1 and UQCRC2) and probably 6 low-molecular weight proteins. Heme b serves as cofactor.

The protein localises to the mitochondrion inner membrane. Its function is as follows. Component of the ubiquinol-cytochrome c reductase complex (complex III or cytochrome b-c1 complex) that is part of the mitochondrial respiratory chain. The b-c1 complex mediates electron transfer from ubiquinol to cytochrome c. Contributes to the generation of a proton gradient across the mitochondrial membrane that is then used for ATP synthesis. The chain is Cytochrome b (MT-CYB) from Toxicocalamus preussi (Preuss's forest snake).